Reading from the N-terminus, the 89-residue chain is Bombyxin B-1 (89 aa).

The N-terminal stretch at 1–19 is a signal peptide; it reads MKTSVMFMLVIVISLMCSG. 3 cysteine pairs are disulfide-bonded: Cys-29–Cys-75, Cys-41–Cys-88, and Cys-74–Cys-79. The propeptide at 48 to 66 is c peptide like; it reads GGAQYAPYFWTRQYLGSRG.

It belongs to the insulin family. Heterodimer of a B chain and an A chain linked by two disulfide bonds.

Its subcellular location is the secreted. Brain peptide responsible for activation of prothoracic glands to produce ecdysone in insects. The chain is Bombyxin B-1 (BBXB1) from Bombyx mori (Silk moth).